We begin with the raw amino-acid sequence, 173 residues long: Bifunctional protein PyrR (173 aa).

The PRPP-binding signature appears at valine 94–threonine 106.

Belongs to the purine/pyrimidine phosphoribosyltransferase family. PyrR subfamily. In terms of assembly, homodimer and homohexamer; in equilibrium.

The catalysed reaction is UMP + diphosphate = 5-phospho-alpha-D-ribose 1-diphosphate + uracil. In terms of biological role, regulates transcriptional attenuation of the pyrimidine nucleotide (pyr) operon by binding in a uridine-dependent manner to specific sites on pyr mRNA. This disrupts an antiterminator hairpin in the RNA and favors formation of a downstream transcription terminator, leading to a reduced expression of downstream genes. Also displays a weak uracil phosphoribosyltransferase activity which is not physiologically significant. The protein is Bifunctional protein PyrR of Streptococcus gordonii (strain Challis / ATCC 35105 / BCRC 15272 / CH1 / DL1 / V288).